Here is a 193-residue protein sequence, read N- to C-terminus: Holliday junction branch migration complex subunit RuvA (193 aa).

The interval 1–64 (MIGRIAGTLI…EDAHLLYGFG (64 aa)) is domain I. Residues 65-143 (TASERNTFRE…AELGHVPGTP (79 aa)) form a domain II region. A flexible linker region spans residues 144-151 (AVPDSAVD). Residues 151–193 (DVLNALLALGYSEKEAAAAIKQVPAGTGVSDGIKLALKALSKA) form a domain III region.

Belongs to the RuvA family. As to quaternary structure, homotetramer. Forms an RuvA(8)-RuvB(12)-Holliday junction (HJ) complex. HJ DNA is sandwiched between 2 RuvA tetramers; dsDNA enters through RuvA and exits via RuvB. An RuvB hexamer assembles on each DNA strand where it exits the tetramer. Each RuvB hexamer is contacted by two RuvA subunits (via domain III) on 2 adjacent RuvB subunits; this complex drives branch migration. In the full resolvosome a probable DNA-RuvA(4)-RuvB(12)-RuvC(2) complex forms which resolves the HJ.

It is found in the cytoplasm. In terms of biological role, the RuvA-RuvB-RuvC complex processes Holliday junction (HJ) DNA during genetic recombination and DNA repair, while the RuvA-RuvB complex plays an important role in the rescue of blocked DNA replication forks via replication fork reversal (RFR). RuvA specifically binds to HJ cruciform DNA, conferring on it an open structure. The RuvB hexamer acts as an ATP-dependent pump, pulling dsDNA into and through the RuvAB complex. HJ branch migration allows RuvC to scan DNA until it finds its consensus sequence, where it cleaves and resolves the cruciform DNA. The protein is Holliday junction branch migration complex subunit RuvA of Cupriavidus necator (strain ATCC 17699 / DSM 428 / KCTC 22496 / NCIMB 10442 / H16 / Stanier 337) (Ralstonia eutropha).